The chain runs to 389 residues: Phospho-N-acetylmuramoyl-pentapeptide-transferase (389 aa).

Transmembrane regions (helical) follow at residues 25 to 45, 73 to 93, 97 to 117, 135 to 155, 190 to 210, 222 to 242, 258 to 278, 286 to 306, 311 to 331, and 366 to 386; these read RAVM…PWVI, TMGG…WGDL, FIWI…VDDY, FWQS…VSEA, ISYP…IVGA, GLVI…AYVM, GAGE…AFLW, VFMG…VAVI, IVLF…MLQV, and QVVV…LSTL.

It belongs to the glycosyltransferase 4 family. MraY subfamily. It depends on Mg(2+) as a cofactor.

The protein resides in the cell inner membrane. It carries out the reaction UDP-N-acetyl-alpha-D-muramoyl-L-alanyl-gamma-D-glutamyl-meso-2,6-diaminopimeloyl-D-alanyl-D-alanine + di-trans,octa-cis-undecaprenyl phosphate = di-trans,octa-cis-undecaprenyl diphospho-N-acetyl-alpha-D-muramoyl-L-alanyl-D-glutamyl-meso-2,6-diaminopimeloyl-D-alanyl-D-alanine + UMP. It functions in the pathway cell wall biogenesis; peptidoglycan biosynthesis. In terms of biological role, catalyzes the initial step of the lipid cycle reactions in the biosynthesis of the cell wall peptidoglycan: transfers peptidoglycan precursor phospho-MurNAc-pentapeptide from UDP-MurNAc-pentapeptide onto the lipid carrier undecaprenyl phosphate, yielding undecaprenyl-pyrophosphoryl-MurNAc-pentapeptide, known as lipid I. The sequence is that of Phospho-N-acetylmuramoyl-pentapeptide-transferase from Burkholderia multivorans (strain ATCC 17616 / 249).